The chain runs to 122 residues: Phosphoribosyl-ATP pyrophosphatase (122 aa).

The protein belongs to the PRA-PH family.

The protein localises to the cytoplasm. It carries out the reaction 1-(5-phospho-beta-D-ribosyl)-ATP + H2O = 1-(5-phospho-beta-D-ribosyl)-5'-AMP + diphosphate + H(+). Its pathway is amino-acid biosynthesis; L-histidine biosynthesis; L-histidine from 5-phospho-alpha-D-ribose 1-diphosphate: step 2/9. The chain is Phosphoribosyl-ATP pyrophosphatase from Burkholderia thailandensis (strain ATCC 700388 / DSM 13276 / CCUG 48851 / CIP 106301 / E264).